Consider the following 78-residue polypeptide: Small outer capsid protein (78 aa).

The protein belongs to the Tevenvirinae Soc family. Homotrimer. Interacts with the major capsid protein; three soc molecules associate with each interface between the major capsid protein facets.

The protein localises to the virion. In terms of biological role, capsid decoration protein which helps to stabilize the capsid against extremes of pH and temperature. Once maturation and expansion of the capsid has occured, trimers of soc attach the interfaces between the hexamer of the major capsid protein. Acts as a 'glue' between neighboring hexameric capsomers. Dispensable for the head morphogenesis and phage infection. The protein is Small outer capsid protein of Escherichia phage RB69 (Bacteriophage RB69).